The chain runs to 944 residues: Envelope glycoprotein B (944 aa).

2 disordered regions span residues 1–37 (MGPPPPLRRQRLLLPRPSRRRPPARLASGRRSSRPGS) and 68–108 (TDGG…RVTG). The first 55 residues, 1–55 (MGPPPPLRRQRLLLPRPSRRRPPARLASGRRSSRPGSSWTWYATLIASLVWYPTV), serve as a signal peptide directing secretion. Over residues 24 to 37 (ARLASGRRSSRPGS) the composition is skewed to low complexity. Residues 56–785 (SSTTLEATVV…GGFVSFFTNP (730 aa)) are Virion surface-facing. A compositionally biased stretch (gly residues) spans 71 to 85 (GATGQASGGGGGGAG). Over residues 89 to 99 (PSESPETSADT) the composition is skewed to polar residues. N-linked (GlcNAc...) asparagine; by host glycosylation occurs at Asn114. Cystine bridges form between Cys125/Cys577, Cys142/Cys533, Cys215/Cys280, Cys372/Cys420, and Cys608/Cys645. The segment at 182–188 (SYAYIYT) is involved in fusion and/or binding to host membrane. Asn238 carries an N-linked (GlcNAc...) asparagine; by host glycan. The involved in fusion and/or binding to host membrane stretch occupies residues 267 to 274 (GSTWLYKE). N-linked (GlcNAc...) asparagine; by host glycans are attached at residues Asn369, Asn409, Asn414, Asn426, Asn481, Asn485, and Asn620. 2 hydrophobic membrane proximal region regions span residues 731–783 (ITSK…SFFT) and 762–782 (LVLGAVGGAVASVVGGFVSFF). Residues 786 to 806 (FGSLTLIILVVAVVVIVFLLY) form a helical membrane-spanning segment. Over 807-944 (QRQRSAVRQP…RDTGSDSELA (138 aa)) the chain is Intravirion. 2 disordered regions span residues 834–878 (TVTT…SATA) and 902–944 (REVP…SELA). The short motif at 931 to 934 (YRRL) is the Internalization motif element.

The protein belongs to the herpesviridae glycoprotein B family. In terms of assembly, homotrimer; disulfide-linked. Binds to heparan sulfate proteoglycans. Interacts with gH/gL heterodimer. Post-translationally, a proteolytic cleavage by host furin generates two subunits that remain linked by disulfide bonds.

The protein localises to the virion membrane. The protein resides in the host cell membrane. It is found in the host endosome membrane. It localises to the host Golgi apparatus membrane. In terms of biological role, envelope glycoprotein that forms spikes at the surface of virion envelope. Essential for the initial attachment to heparan sulfate moieties of the host cell surface proteoglycans. Involved in fusion of viral and cellular membranes leading to virus entry into the host cell. Following initial binding to its host receptors, membrane fusion is mediated by the fusion machinery composed at least of gB and the heterodimer gH/gL. May be involved in the fusion between the virion envelope and the outer nuclear membrane during virion egress. The chain is Envelope glycoprotein B from Tupaiid herpesvirus (strain 2) (TuHV-2).